A 161-amino-acid chain; its full sequence is Endoribonuclease YbeY (161 aa).

Residues His-121, His-125, and His-131 each contribute to the Zn(2+) site.

Belongs to the endoribonuclease YbeY family. Requires Zn(2+) as cofactor.

The protein resides in the cytoplasm. Functionally, single strand-specific metallo-endoribonuclease involved in late-stage 70S ribosome quality control and in maturation of the 3' terminus of the 16S rRNA. This chain is Endoribonuclease YbeY, found in Xanthomonas axonopodis pv. citri (strain 306).